The primary structure comprises 1040 residues: MQVLPPGSTGGPSRLFILRPVATTLLMAAILLAGIIGYRFLPVAALPEVDYPTIQVVTLYPGASPDVMTSAVTAPLERQFGQMSGLKQMSSQSSGGASVVTLQFQLTLPLDVAEQEVQAAINAATNLLPSDLPNPPIYSKVNPADPPIMTLAVTSNAMPMTQVEDMVETRVAQKISQVSGVGLVTLAGGQRPAVRVKLNAQAIAALGLTSETVRTAITGANVNSAKGSLDGPERAVTLSANDQMQSADEYRKLIIAYQNGAPVRLGDVATVEQGAENSWLGAWANQAPAIVMNVQRQPGANIIATADSIRQMLPQLTESLPKSVKVTVLSDRTTNIRASVRDTQFELMLAIALVVMIIYLFLRNIPATIIPGVAVPLSLIGTFAVMVFLDFSINNLTLMALTIATGFVVDDAIVVIENISRYIEKGEKPLAAALKGAGEIGFTIISLTFSLIAVLIPLLFMGDIVGRLFREFAVTLAVAILISAVVSLTLTPMMCARMLSQQSLRKQNRFSRACERMFDRVIASYGRGLAKVLNHPWLTLSVAFATLLLSVMLWIVIPKGFFPVQDNGIIQGTLQAPQSSSYASMAQRQRQVAERILQDPAVQSLTTFVGVDGANPTLNSARLQINLKPLDARDDRVQQVISRLQTAVATIPGVALYLQPTQDLTIDTQVSRTQYQFTLQATTLDALSHWVPKLQNALQSLPQLSEVSSDWQDRGLAAWVNVDRDSASRLGISMADVDNALYNAFGQRLISTIYTQANQYRVVLEHNTASTPGLAALETIRLTSRDGGTVPLSAIARIEQRFAPLSINHLDQFPVTTFSFNVPEGYSLGDAVQAILDTEKTLALPADITTQFQGSTLAFQAALGSTVWLIVAAVVAMYIVLGVLYESFIHPITILSTLPTAGVGALLALIIAGSELDIIAIIGIILLIGIVKKNAIMMIDFALAAEREQGMSPRDAIFQACLLRFRPILMTTLAALLGALPLMLSTGVGAELRRPLGIAMVGGLLVSQVLTLFTTPVIYLLFDRLSLYVKSRFPRHKEEA.

The next 12 helical transmembrane spans lie at 25–45 (LLMAAILLAGIIGYRFLPVAA), 347–367 (LMLAIALVVMIIYLFLRNIPA), 369–389 (IIPGVAVPLSLIGTFAVMVFL), 396–416 (LTLMALTIATGFVVDDAIVVI), 440–460 (IGFTIISLTFSLIAVLIPLLF), 472–492 (FAVTLAVAILISAVVSLTLTP), 537–557 (WLTLSVAFATLLLSVMLWIVI), 863–883 (LGSTVWLIVAAVVAMYIVLGV), 888–908 (FIHPITILSTLPTAGVGALLA), 910–930 (IIAGSELDIIAIIGIILLIGI), 968–988 (ILMTTLAALLGALPLMLSTGV), and 998–1018 (IAMVGGLLVSQVLTLFTTPVI).

This sequence belongs to the resistance-nodulation-cell division (RND) (TC 2.A.6) family. MdtB subfamily. In terms of assembly, part of a tripartite efflux system composed of MdtA, MdtB and MdtC. MdtB forms a heteromultimer with MdtC.

The protein localises to the cell inner membrane. This chain is Multidrug resistance protein MdtB, found in Salmonella dublin (strain CT_02021853).